A 427-amino-acid chain; its full sequence is 3-phosphoshikimate 1-carboxyvinyltransferase (427 aa).

3-phosphoshikimate-binding residues include Lys-20, Ser-21, and Arg-25. Lys-20 serves as a coordination point for phosphoenolpyruvate. Phosphoenolpyruvate-binding residues include Gly-90 and Arg-118. 3-phosphoshikimate-binding residues include Ser-163, Ser-164, Gln-165, Ser-191, Asp-309, and Lys-336. Gln-165 serves as a coordination point for phosphoenolpyruvate. Asp-309 (proton acceptor) is an active-site residue. Phosphoenolpyruvate contacts are provided by Arg-340 and Arg-381.

This sequence belongs to the EPSP synthase family. Monomer.

The protein resides in the cytoplasm. It carries out the reaction 3-phosphoshikimate + phosphoenolpyruvate = 5-O-(1-carboxyvinyl)-3-phosphoshikimate + phosphate. It participates in metabolic intermediate biosynthesis; chorismate biosynthesis. Functionally, catalyzes the transfer of the enolpyruvyl moiety of phosphoenolpyruvate (PEP) to the 5-hydroxyl of shikimate-3-phosphate (S3P) to produce enolpyruvyl shikimate-3-phosphate and inorganic phosphate. This Methanococcoides burtonii (strain DSM 6242 / NBRC 107633 / OCM 468 / ACE-M) protein is 3-phosphoshikimate 1-carboxyvinyltransferase.